The sequence spans 102 residues: MYIDITHYLTVSALMFTIGIAGIFLNRKNVIIILMSIELILLSVNLNFVAFSAFLHDLVGQIFALFVLTVAAAEAAIGLAILVVFFRNRGSIAVEDVNVMKG.

The next 3 membrane-spanning stretches (helical) occupy residues 5–25, 31–51, and 66–86; these read ITHYLTVSALMFTIGIAGIFL, IIILMSIELILLSVNLNFVAF, and FVLTVAAAEAAIGLAILVVFF.

It belongs to the complex I subunit 4L family. NDH-1 is composed of 14 different subunits. Subunits NuoA, H, J, K, L, M, N constitute the membrane sector of the complex.

The protein localises to the cell inner membrane. The catalysed reaction is a quinone + NADH + 5 H(+)(in) = a quinol + NAD(+) + 4 H(+)(out). Its function is as follows. NDH-1 shuttles electrons from NADH, via FMN and iron-sulfur (Fe-S) centers, to quinones in the respiratory chain. The immediate electron acceptor for the enzyme in this species is believed to be ubiquinone. Couples the redox reaction to proton translocation (for every two electrons transferred, four hydrogen ions are translocated across the cytoplasmic membrane), and thus conserves the redox energy in a proton gradient. The chain is NADH-quinone oxidoreductase subunit K from Bartonella grahamii (strain as4aup).